A 389-amino-acid chain; its full sequence is Methionyl-tRNA formyltransferase, mitochondrial (389 aa).

This sequence belongs to the Fmt family.

The protein localises to the mitochondrion. It catalyses the reaction L-methionyl-tRNA(fMet) + (6R)-10-formyltetrahydrofolate = N-formyl-L-methionyl-tRNA(fMet) + (6S)-5,6,7,8-tetrahydrofolate + H(+). Methionyl-tRNA formyltransferase that formylates methionyl-tRNA in mitochondria and is crucial for translation initiation. The chain is Methionyl-tRNA formyltransferase, mitochondrial (MTFMT) from Homo sapiens (Human).